A 100-amino-acid chain; its full sequence is Putative exopolysaccharide production repressor protein y4xQ (100 aa).

2 helical membrane-spanning segments follow: residues 9–29 and 35–55; these read ILWL…GSIS and TMVG…FLLW. The tract at residues 66-100 is disordered; the sequence is TTGQFHGEEQPGDPRIAGTHGRTDGDPCFEDEDSR.

To Rhizobium exopolysaccharide production repressor protein (ExoX).

The protein localises to the cell membrane. Functionally, could be involved in the inhibition of exopolysaccharide synthesis (EPS) and nodulation ability (nod). The protein is Putative exopolysaccharide production repressor protein y4xQ of Sinorhizobium fredii (strain NBRC 101917 / NGR234).